Consider the following 298-residue polypeptide: Putative olfactory receptor 10D4 (298 aa).

The Extracellular segment spans residues Met-1–Thr-23. N-linked (GlcNAc...) asparagine glycosylation occurs at Asn-3. Residues Ala-24–Leu-44 form a helical membrane-spanning segment. Residues Thr-45 to Arg-52 are Cytoplasmic-facing. Residues Leu-53–Ser-73 form a helical membrane-spanning segment. The Extracellular segment spans residues Thr-74–Ser-97. An intrachain disulfide couples Cys-95 to Cys-187. A helical membrane pass occupies residues Gln-98 to Cys-118. Over Asp-119–Arg-137 the chain is Cytoplasmic. Residues Val-138 to Thr-158 form a helical membrane-spanning segment. The Extracellular segment spans residues Pro-159–Arg-195. The chain crosses the membrane as a helical span at residues Val-196–Ser-215. The Cytoplasmic portion of the chain corresponds to Tyr-216 to Ala-235. A helical transmembrane segment spans residues Phe-236 to Ile-256. Residues Tyr-257 to Gly-267 lie on the Extracellular side of the membrane. A helical membrane pass occupies residues Ser-268 to Leu-288. Residues Arg-289–Pro-298 are Cytoplasmic-facing.

It belongs to the G-protein coupled receptor 1 family.

The protein resides in the cell membrane. Its function is as follows. Odorant receptor. The polypeptide is Putative olfactory receptor 10D4 (OR10D4P) (Homo sapiens (Human)).